We begin with the raw amino-acid sequence, 354 residues long: Probable tartrate dehydrogenase/decarboxylase (354 aa).

Mn(2+) contacts are provided by D221, D245, and D249.

The protein belongs to the isocitrate and isopropylmalate dehydrogenases family. It depends on Mg(2+) as a cofactor. Mn(2+) is required as a cofactor. K(+) serves as cofactor.

The catalysed reaction is tartrate + NAD(+) = 2-hydroxy-3-oxosuccinate + NADH + H(+). It catalyses the reaction (2R,3S)-tartrate + NAD(+) = 2-hydroxy-3-oxosuccinate + NADH + H(+). The enzyme catalyses (2R,3R)-tartrate + NAD(+) = 2-hydroxy-3-oxosuccinate + NADH + H(+). It carries out the reaction (2R,3R)-tartrate + H(+) = (R)-glycerate + CO2. The catalysed reaction is (R)-malate + NAD(+) = pyruvate + CO2 + NADH. In terms of biological role, has multiple catalytic activities. Apart from catalyzing the oxidation of (+)-tartrate to oxaloglycolate, also converts meso-tartrate to D-glycerate and catalyzes the oxidative decarboxylation of D-malate to pyruvate. This Bacillus subtilis (strain 168) protein is Probable tartrate dehydrogenase/decarboxylase (ycsA).